Reading from the N-terminus, the 345-residue chain is Alkaline phosphatase isozyme conversion protein (345 aa).

The first 24 residues, 1–24, serve as a signal peptide directing secretion; it reads MFSALRHRTAALALGVCFILPVHA. Zn(2+) contacts are provided by His-117, Asp-143, Glu-176, and Asp-204.

This sequence belongs to the peptidase M28 family. M28C subfamily.

Functionally, this protein, presumably an aminopeptidase, mediates the conversion of E.coli alkaline phosphatase isozyme 1, to isozymes 2 and 3 by removing, one by one, the two N-terminal arginine residues. The polypeptide is Alkaline phosphatase isozyme conversion protein (iap) (Escherichia coli (strain K12)).